The following is a 44-amino-acid chain: Somatoliberin (44 aa).

Leucine amide is present on L44.

This sequence belongs to the glucagon family.

It localises to the secreted. Its function is as follows. GRF is released by the hypothalamus and acts on the adenohypophyse to stimulate the secretion of growth hormone. The polypeptide is Somatoliberin (GHRH) (Capra hircus (Goat)).